Reading from the N-terminus, the 304-residue chain is Acetyl-coenzyme A carboxylase carboxyl transferase subunit beta (304 aa).

Residues 52 to 304 (EVTKCPSCGV…TIFKVLNDII (253 aa)) enclose the CoA carboxyltransferase N-terminal domain. Zn(2+) contacts are provided by Cys56, Cys59, Cys75, and Cys78. The segment at 56–78 (CPSCGVLSHKSEIRANMKMCSNC) adopts a C4-type zinc-finger fold.

The protein belongs to the AccD/PCCB family. In terms of assembly, acetyl-CoA carboxylase is a heterohexamer composed of biotin carboxyl carrier protein (AccB), biotin carboxylase (AccC) and two subunits each of ACCase subunit alpha (AccA) and ACCase subunit beta (AccD). Zn(2+) is required as a cofactor.

The protein localises to the cytoplasm. It catalyses the reaction N(6)-carboxybiotinyl-L-lysyl-[protein] + acetyl-CoA = N(6)-biotinyl-L-lysyl-[protein] + malonyl-CoA. Its pathway is lipid metabolism; malonyl-CoA biosynthesis; malonyl-CoA from acetyl-CoA: step 1/1. In terms of biological role, component of the acetyl coenzyme A carboxylase (ACC) complex. Biotin carboxylase (BC) catalyzes the carboxylation of biotin on its carrier protein (BCCP) and then the CO(2) group is transferred by the transcarboxylase to acetyl-CoA to form malonyl-CoA. The protein is Acetyl-coenzyme A carboxylase carboxyl transferase subunit beta of Fusobacterium nucleatum subsp. nucleatum (strain ATCC 25586 / DSM 15643 / BCRC 10681 / CIP 101130 / JCM 8532 / KCTC 2640 / LMG 13131 / VPI 4355).